The sequence spans 218 residues: Pyridoxine/pyridoxamine 5'-phosphate oxidase (218 aa).

Substrate is bound by residues Arg12–Tyr15 and Arg70. FMN-binding positions include Arg65–Arg70, Tyr80–Thr81, Lys87, and Gln109. Residues Tyr127, Arg131, and Ser135 each coordinate substrate. Residues Gln145–Ser146 and Trp191 contribute to the FMN site. Arg197–His199 provides a ligand contact to substrate. FMN is bound at residue Arg201.

The protein belongs to the pyridoxamine 5'-phosphate oxidase family. As to quaternary structure, homodimer. FMN is required as a cofactor.

The enzyme catalyses pyridoxamine 5'-phosphate + O2 + H2O = pyridoxal 5'-phosphate + H2O2 + NH4(+). It catalyses the reaction pyridoxine 5'-phosphate + O2 = pyridoxal 5'-phosphate + H2O2. It participates in cofactor metabolism; pyridoxal 5'-phosphate salvage; pyridoxal 5'-phosphate from pyridoxamine 5'-phosphate: step 1/1. The protein operates within cofactor metabolism; pyridoxal 5'-phosphate salvage; pyridoxal 5'-phosphate from pyridoxine 5'-phosphate: step 1/1. In terms of biological role, catalyzes the oxidation of either pyridoxine 5'-phosphate (PNP) or pyridoxamine 5'-phosphate (PMP) into pyridoxal 5'-phosphate (PLP). This is Pyridoxine/pyridoxamine 5'-phosphate oxidase from Acinetobacter baylyi (strain ATCC 33305 / BD413 / ADP1).